The chain runs to 476 residues: Methylenetetrahydrofolate--tRNA-(uracil-5-)-methyltransferase TrmFO (476 aa).

14-19 (GGGLAG) contacts FAD.

Belongs to the MnmG family. TrmFO subfamily. Requires FAD as cofactor.

Its subcellular location is the cytoplasm. The enzyme catalyses uridine(54) in tRNA + (6R)-5,10-methylene-5,6,7,8-tetrahydrofolate + NADH + H(+) = 5-methyluridine(54) in tRNA + (6S)-5,6,7,8-tetrahydrofolate + NAD(+). It carries out the reaction uridine(54) in tRNA + (6R)-5,10-methylene-5,6,7,8-tetrahydrofolate + NADPH + H(+) = 5-methyluridine(54) in tRNA + (6S)-5,6,7,8-tetrahydrofolate + NADP(+). Functionally, catalyzes the folate-dependent formation of 5-methyl-uridine at position 54 (M-5-U54) in all tRNAs. In Brucella anthropi (strain ATCC 49188 / DSM 6882 / CCUG 24695 / JCM 21032 / LMG 3331 / NBRC 15819 / NCTC 12168 / Alc 37) (Ochrobactrum anthropi), this protein is Methylenetetrahydrofolate--tRNA-(uracil-5-)-methyltransferase TrmFO.